A 35-amino-acid chain; its full sequence is Photosystem II reaction center protein M (35 aa).

Residues 5 to 25 traverse the membrane as a helical segment; that stretch reads ILAFIATALFILVPTAFLLII.

It belongs to the PsbM family. As to quaternary structure, PSII is composed of 1 copy each of membrane proteins PsbA, PsbB, PsbC, PsbD, PsbE, PsbF, PsbH, PsbI, PsbJ, PsbK, PsbL, PsbM, PsbT, PsbX, PsbY, PsbZ, Psb30/Ycf12, at least 3 peripheral proteins of the oxygen-evolving complex and a large number of cofactors. It forms dimeric complexes.

It is found in the plastid. It localises to the chloroplast thylakoid membrane. Its function is as follows. One of the components of the core complex of photosystem II (PSII). PSII is a light-driven water:plastoquinone oxidoreductase that uses light energy to abstract electrons from H(2)O, generating O(2) and a proton gradient subsequently used for ATP formation. It consists of a core antenna complex that captures photons, and an electron transfer chain that converts photonic excitation into a charge separation. This subunit is found at the monomer-monomer interface. This is Photosystem II reaction center protein M from Amborella trichopoda.